The following is a 284-amino-acid chain: uncharacterized protein (284 aa).

The protein belongs to the AtsA family.

This is an uncharacterized protein from Mycobacterium leprae (strain TN).